The chain runs to 134 residues: Salivary protein 15 Iric-1 (134 aa).

An N-terminal signal peptide occupies residues 1–21 (MESFVAMKVVCITVLFVIVAV). N-linked (GlcNAc...) asparagine glycosylation occurs at N22. Positions 48–67 (PSYIRNPQKLALELLEICKN) are required for Borrelia OspC-binding. N91 and N103 each carry an N-linked (GlcNAc...) asparagine glycan. The segment at 115–134 (GPNGETCAEKSKCVGHIPGC) is CD4-binding.

The protein belongs to the salp15 family. As to quaternary structure, monomer. Interacts with host CD4. Interacts with host DC-SIGN (CD209). (Microbial infection) Interacts with Borrelia outer surface protein C (OspC). Expressed in salivary glands. Detected in fed adult female.

The protein localises to the secreted. Salivary tick protein that downregulates host immune system by binding to both dendritic cells, and CD4(+) T cells. Specifically binds to the CD4 coreceptor on T cells. This interaction prevents the activation of the Src kinase, Lck, and its downstream substrate Zap-70, and results in deficient activation of PLCgamma1, the repression of calcium fluxes triggered by T-cell antigen receptor (TCR) ligation, and a subsequent reduction in interleukin-2 production. This salivary protein also binds to DC-SIGN (CD209) on dendritic cells (DC) and activates the Raf-1 kinase/MEK signaling pathway that results in down-regulating expression of pro-inflammatory cytokines. Furthermore, it inhibits T cell proliferation induced by DCs. In addition, it inhibits in vitro keratinocyte inflammation induced by Borrelia burgdorferi or by the major outer surface protein (OspC) of Borrelia. In addition, it downregulates chemokines and monocyte chemoattractant protein 1, as well as several antimicrobial peptides such as defensins, cathelicidin, psoriasin, and RNase 7. Apart from its immunomodulatory activities, it is also associated with protection of Borrelia spirochetes from antibody-mediated killing through its binding to OspC. In vivo, tests on different immune disease animal models show promising therapeutic results, e.g., in inhibiting HIV infection, experimental autoimmune encephalomyelitis, transplantation rejection, and asthma. Its function is as follows. (Microbial infection) Protects Borrelia garinii (strain VSBP) from host complement-mediated killing by binding to the surface of spirochetes and preventing deposition of host C5b-9 membrane attack complexes. Protects Borrelia garinii (strain A87S) from host complement-mediated killing. In terms of biological role, (Microbial infection) Partially protects Borrelia burgdorferi (strains VS215 and B31) from host complement-mediated killing. The polypeptide is Salivary protein 15 Iric-1 (Ixodes ricinus (Common tick)).